The primary structure comprises 610 residues: Elongation factor 4 (610 aa).

In terms of domain architecture, tr-type G spans 11-193 (ENIRNFSIIA…QIVEKVPAPS (183 aa)). Residues 23-28 (DHGKST) and 140-143 (NKID) contribute to the GTP site.

The protein belongs to the TRAFAC class translation factor GTPase superfamily. Classic translation factor GTPase family. LepA subfamily.

The protein localises to the cell membrane. The catalysed reaction is GTP + H2O = GDP + phosphate + H(+). Functionally, required for accurate and efficient protein synthesis under certain stress conditions. May act as a fidelity factor of the translation reaction, by catalyzing a one-codon backward translocation of tRNAs on improperly translocated ribosomes. Back-translocation proceeds from a post-translocation (POST) complex to a pre-translocation (PRE) complex, thus giving elongation factor G a second chance to translocate the tRNAs correctly. Binds to ribosomes in a GTP-dependent manner. This is Elongation factor 4 from Streptococcus equi subsp. zooepidemicus (strain MGCS10565).